Here is a 953-residue protein sequence, read N- to C-terminus: Translation initiation factor IF-2 (953 aa).

The disordered stretch occupies residues 53-368 (AKKAVAGTSE…PVTERKFHEL (316 aa)). Composition is skewed to basic and acidic residues over residues 135 to 151 (FKAE…ERRK) and 162 to 190 (RNDR…RNRQ). Over residues 191–214 (EQGNQHRNQGQSQYNQQRQSFNQG) the composition is skewed to low complexity. The segment covering 236 to 266 (RSSEERFKQAKANKEALREQNKRKEQAKLED) has biased composition (basic and acidic residues). The span at 274 to 288 (PKPTAKAPATPAPTA) shows a compositional bias: low complexity. A compositionally biased stretch (basic and acidic residues) spans 301–318 (ARPDKERDNFDHEEDGPR). Low complexity predominate over residues 332 to 341 (NQKNSNWNNN). One can recognise a tr-type G domain in the interval 455–622 (ERPPVVTIMG…TVLLVAEIQE (168 aa)). The tract at residues 464–471 (GHVDHGKT) is G1. Residue 464–471 (GHVDHGKT) participates in GTP binding. Residues 489–493 (GITQH) form a G2 region. Residues 510 to 513 (DTPG) form a G3 region. GTP contacts are provided by residues 510 to 514 (DTPGH) and 564 to 567 (NKID). The segment at 564–567 (NKID) is G4. Residues 600–602 (SAK) form a G5 region.

This sequence belongs to the TRAFAC class translation factor GTPase superfamily. Classic translation factor GTPase family. IF-2 subfamily.

Its subcellular location is the cytoplasm. Its function is as follows. One of the essential components for the initiation of protein synthesis. Protects formylmethionyl-tRNA from spontaneous hydrolysis and promotes its binding to the 30S ribosomal subunits. Also involved in the hydrolysis of GTP during the formation of the 70S ribosomal complex. This is Translation initiation factor IF-2 from Streptococcus gordonii (strain Challis / ATCC 35105 / BCRC 15272 / CH1 / DL1 / V288).